Consider the following 552-residue polypeptide: Glycosyltransferase family 92 protein RCOM_0530710 (552 aa).

Residues Trp-12 to Phe-34 form a helical; Signal-anchor membrane-spanning segment. The region spanning Lys-277–Trp-520 is the GT92 domain.

The protein belongs to the glycosyltransferase 92 family.

The protein localises to the membrane. This is Glycosyltransferase family 92 protein RCOM_0530710 from Ricinus communis (Castor bean).